The primary structure comprises 607 residues: Translation initiation factor IF-2 (607 aa).

The disordered stretch occupies residues 54–93 (SAPQAQDSTPVAETPAAAQPAAPQAASSQPAAAQAAQAVA). A compositionally biased stretch (low complexity) spans 62–93 (TPVAETPAAAQPAAPQAASSQPAAAQAAQAVA). Residues 108-281 (HRAPVVTIMG…ELEDLRADPK (174 aa)) enclose the tr-type G domain. A G1 region spans residues 117-124 (GHVDHGKT). Position 117–124 (117–124 (GHVDHGKT)) interacts with GTP. The segment at 142–146 (GITQH) is G2. Residues 163 to 166 (DTPG) are G3. GTP-binding positions include 163 to 167 (DTPGH) and 217 to 220 (NKVD). Residues 217-220 (NKVD) are G4. The G5 stretch occupies residues 253-255 (SAK).

The protein belongs to the TRAFAC class translation factor GTPase superfamily. Classic translation factor GTPase family. IF-2 subfamily.

It is found in the cytoplasm. Its function is as follows. One of the essential components for the initiation of protein synthesis. Protects formylmethionyl-tRNA from spontaneous hydrolysis and promotes its binding to the 30S ribosomal subunits. Also involved in the hydrolysis of GTP during the formation of the 70S ribosomal complex. This chain is Translation initiation factor IF-2, found in Deinococcus deserti (strain DSM 17065 / CIP 109153 / LMG 22923 / VCD115).